Here is a 301-residue protein sequence, read N- to C-terminus: Nucleotide-binding protein Rfer_1653 (301 aa).

15–22 contributes to the ATP binding site; the sequence is GMSGSGKS. Residue 64–67 participates in GTP binding; sequence DVRT.

Belongs to the RapZ-like family.

Functionally, displays ATPase and GTPase activities. The polypeptide is Nucleotide-binding protein Rfer_1653 (Albidiferax ferrireducens (strain ATCC BAA-621 / DSM 15236 / T118) (Rhodoferax ferrireducens)).